The chain runs to 169 residues: Myosin regulatory light chain 11 (169 aa).

A2 bears the N,N,N-trimethylalanine mark. S15 and S16 each carry phosphoserine. 2 positions are modified to phosphothreonine: T25 and T35. The EF-hand 1 domain occupies 25–60 (TQIQEFKEAFTVIDQNRDGIIDKEDLRDTFAAMGRL). Residues D38, N40, D42, and D49 each contribute to the Ca(2+) site. S75 is modified (phosphoserine). EF-hand domains lie at 95 to 130 (DPED…QCDR) and 131 to 166 (FSQE…GDAK). T101 is modified (phosphothreonine).

Myosin is a hexamer of 2 heavy chains and 4 light chains.

Myosin regulatory subunit that plays an essential role to maintain muscle integrity during early development. Plays a role in regulation of muscle contraction. This Mus musculus (Mouse) protein is Myosin regulatory light chain 11 (Myl11).